Reading from the N-terminus, the 145-residue chain is Leptin (145 aa).

An N-terminal signal peptide occupies residues 1 to 12 (LWLWPYLFFIEA).

This sequence belongs to the leptin family.

The protein localises to the secreted. Key player in the regulation of energy balance and body weight control. Once released into the circulation, has central and peripheral effects by binding LEPR, found in many tissues, which results in the activation of several major signaling pathways. In the hypothalamus, acts as an appetite-regulating factor that induces a decrease in food intake and an increase in energy consumption by inducing anorexinogenic factors and suppressing orexigenic neuropeptides, also regulates bone mass and secretion of hypothalamo-pituitary-adrenal hormones. In the periphery, increases basal metabolism, influences reproductive function, regulates pancreatic beta-cell function and insulin secretion, is pro-angiogenic for endothelial cell and affects innate and adaptive immunity. In the arcuate nucleus of the hypothalamus, activates by depolarization POMC neurons inducing FOS and SOCS3 expression to release anorexigenic peptides and inhibits by hyperpolarization NPY neurons inducing SOCS3 with a consequent reduction on release of orexigenic peptides. In addition to its known satiety inducing effect, has a modulatory role in nutrient absorption. In the intestine, reduces glucose absorption by enterocytes by activating PKC and leading to a sequential activation of p38, PI3K and ERK signaling pathways which exerts an inhibitory effect on glucose absorption. Acts as a growth factor on certain tissues, through the activation of different signaling pathways increases expression of genes involved in cell cycle regulation such as CCND1, via JAK2-STAT3 pathway, or VEGFA, via MAPK1/3 and PI3K-AKT1 pathways. May also play an apoptotic role via JAK2-STAT3 pathway and up-regulation of BIRC5 expression. Pro-angiogenic, has mitogenic activity on vascular endothelial cells and plays a role in matrix remodeling by regulating the expression of matrix metalloproteinases (MMPs) and tissue inhibitors of metalloproteinases (TIMPs). In innate immunity, modulates the activity and function of neutrophils by increasing chemotaxis and the secretion of oxygen radicals. Increases phagocytosis by macrophages and enhances secretion of pro-inflammatory mediators. Increases cytotoxic ability of NK cells. Plays a pro-inflammatory role, in synergy with IL1B, by inducing NOS2 which promotes the production of IL6, IL8 and Prostaglandin E2, through a signaling pathway that involves JAK2, PI3K, MAP2K1/MEK1 and MAPK14/p38. In adaptive immunity, promotes the switch of memory T-cells towards T helper-1 cell immune responses. Increases CD4(+)CD25(-) T-cell proliferation and reduces autophagy during TCR (T-cell receptor) stimulation, through MTOR signaling pathway activation and BCL2 up-regulation. The polypeptide is Leptin (LEP) (Equus caballus (Horse)).